Reading from the N-terminus, the 197-residue chain is Ribonuclease HII (197 aa).

One can recognise an RNase H type-2 domain in the interval 9–197; sequence KLIAGVDEVG…APVKKALEQF (189 aa). Positions 15, 16, and 107 each coordinate a divalent metal cation.

Belongs to the RNase HII family. The cofactor is Mn(2+). Mg(2+) serves as cofactor.

Its subcellular location is the cytoplasm. The enzyme catalyses Endonucleolytic cleavage to 5'-phosphomonoester.. Functionally, endonuclease that specifically degrades the RNA of RNA-DNA hybrids. The polypeptide is Ribonuclease HII (Haemophilus influenzae (strain PittEE)).